A 306-amino-acid chain; its full sequence is Methylated RNA-binding protein 1 (306 aa).

The region spanning 155–290 (SRFFVIKSSS…SIGISIINLF (136 aa)) is the YTH domain. Residues 161-163 (KSS), asparagine 207, and tryptophan 231 each bind RNA.

Its function is as follows. RNA-binding protein that acts as a post-transcriptional regulator of phosphate metabolism by binding to the 3'-UTR region of PHO4 mRNA, decreasing its stability. Acts by recognizing and binding N6-methyladenosine (m6A)-containing RNAs, a modification present at internal sites of mRNAs and some non-coding RNAs. This chain is Methylated RNA-binding protein 1, found in Saccharomyces cerevisiae (strain ATCC 204508 / S288c) (Baker's yeast).